The chain runs to 151 residues: Protein PLANT CADMIUM RESISTANCE 1 (151 aa).

2 helical membrane-spanning segments follow: residues 31–47 and 54–71; these read ITLCCPCITFGQVAEIV and CCAAGALYMLIDLITSCG.

This sequence belongs to the cornifelin family. In terms of assembly, homopentamer. Expressed in aerial part, but not in roots. Detected in the guard and mesophyll cells.

Its subcellular location is the cell membrane. Functionally, involved in glutathione-independent cadmium resistance. Reduces cadmium uptake rather than activating efflux, but is not closely coupled to calcium transporter. This Arabidopsis thaliana (Mouse-ear cress) protein is Protein PLANT CADMIUM RESISTANCE 1 (PCR1).